The sequence spans 45 residues: Large ribosomal subunit protein bL36 (45 aa).

The disordered stretch occupies residues 26-45 (VINKKDPNRKQRQKGPARKK). Basic residues predominate over residues 35-45 (KQRQKGPARKK).

This sequence belongs to the bacterial ribosomal protein bL36 family.

This Protochlamydia amoebophila (strain UWE25) protein is Large ribosomal subunit protein bL36.